The chain runs to 228 residues: MPTPKDALQDRLGYRFRRPELLDEALTHRSVTGPDNERLEFLGDGILNFVIADELYHRRPDATEGVLSRLRATLVNGRTLAEIGKGLDVGTALRLGGGEMKSGGQRRKSILADAVEALFGAIYLDGGFDPSRETILRLYRDRLASLPTEAELKDPKTRLQEHLQAGRRPLPRYEVLEVSGQSHDQTFRVACRLQDAAVTAEGEAGSRRKAEQQAAEQMLKRLEDKHER.

One can recognise an RNase III domain in the interval 5-127 (KDALQDRLGY…LFGAIYLDGG (123 aa)). Glutamate 40 provides a ligand contact to Mg(2+). The active site involves aspartate 44. Mg(2+) is bound by residues aspartate 113 and glutamate 116. Glutamate 116 is an active-site residue. Positions 154–224 (DPKTRLQEHL…AEQMLKRLED (71 aa)) constitute a DRBM domain. The segment at 200-228 (AEGEAGSRRKAEQQAAEQMLKRLEDKHER) is disordered. Positions 218–228 (MLKRLEDKHER) are enriched in basic and acidic residues.

The protein belongs to the ribonuclease III family. In terms of assembly, homodimer. Mg(2+) serves as cofactor.

It is found in the cytoplasm. The catalysed reaction is Endonucleolytic cleavage to 5'-phosphomonoester.. Functionally, digests double-stranded RNA. Involved in the processing of primary rRNA transcript to yield the immediate precursors to the large and small rRNAs (23S and 16S). Processes some mRNAs, and tRNAs when they are encoded in the rRNA operon. Processes pre-crRNA and tracrRNA of type II CRISPR loci if present in the organism. The polypeptide is Ribonuclease 3 (Alkalilimnicola ehrlichii (strain ATCC BAA-1101 / DSM 17681 / MLHE-1)).